Consider the following 334-residue polypeptide: Glyceraldehyde-3-phosphate dehydrogenase (334 aa).

NAD(+) is bound by residues 12 to 13 (RI), Asp-37, Arg-81, and Ser-123. D-glyceraldehyde 3-phosphate is bound by residues 153–155 (SCT) and Thr-184. Cys-154 serves as the catalytic Nucleophile. NAD(+) is bound at residue Asn-185. D-glyceraldehyde 3-phosphate is bound by residues Arg-199, 212–213 (TG), and Arg-235. Position 314 (Asn-314) interacts with NAD(+).

This sequence belongs to the glyceraldehyde-3-phosphate dehydrogenase family. In terms of assembly, homotetramer.

It is found in the cytoplasm. The catalysed reaction is D-glyceraldehyde 3-phosphate + phosphate + NAD(+) = (2R)-3-phospho-glyceroyl phosphate + NADH + H(+). It participates in carbohydrate degradation; glycolysis; pyruvate from D-glyceraldehyde 3-phosphate: step 1/5. Its function is as follows. Catalyzes the oxidative phosphorylation of glyceraldehyde 3-phosphate (G3P) to 1,3-bisphosphoglycerate (BPG) using the cofactor NAD. The first reaction step involves the formation of a hemiacetal intermediate between G3P and a cysteine residue, and this hemiacetal intermediate is then oxidized to a thioester, with concomitant reduction of NAD to NADH. The reduced NADH is then exchanged with the second NAD, and the thioester is attacked by a nucleophilic inorganic phosphate to produce BPG. The sequence is that of Glyceraldehyde-3-phosphate dehydrogenase (gap) from Pseudomonas aeruginosa (strain ATCC 15692 / DSM 22644 / CIP 104116 / JCM 14847 / LMG 12228 / 1C / PRS 101 / PAO1).